Reading from the N-terminus, the 376-residue chain is 5-amino-6-(D-ribitylamino)uracil--L-tyrosine 4-hydroxyphenyl transferase 1 (376 aa).

Residues 50-284 (VTYVVNRNIN…AISRILLHGH (235 aa)) enclose the Radical SAM core domain. Cysteine 64, cysteine 68, and cysteine 71 together coordinate [4Fe-4S] cluster.

It belongs to the radical SAM superfamily. CofH family. In terms of assembly, consists of two subunits, CofG and CofH. [4Fe-4S] cluster is required as a cofactor.

The catalysed reaction is 5-amino-6-(D-ribitylamino)uracil + L-tyrosine + S-adenosyl-L-methionine = 5-amino-5-(4-hydroxybenzyl)-6-(D-ribitylimino)-5,6-dihydrouracil + 2-iminoacetate + 5'-deoxyadenosine + L-methionine + H(+). Its pathway is cofactor biosynthesis; coenzyme F0 biosynthesis. Its function is as follows. Catalyzes the radical-mediated synthesis of 5-amino-5-(4-hydroxybenzyl)-6-(D-ribitylimino)-5,6-dihydrouracil from 5-amino-6-(D-ribitylamino)uracil and L-tyrosine. The chain is 5-amino-6-(D-ribitylamino)uracil--L-tyrosine 4-hydroxyphenyl transferase 1 from Methanosarcina barkeri (strain Fusaro / DSM 804).